Reading from the N-terminus, the 249-residue chain is uncharacterized protein (249 aa).

Residues 30-65 adopt a coiled-coil conformation; it reads KVDKLKKLEIKKLEDQKKLKEQEEKHRLTLIRLANA. Residues 66-97 are disordered; it reads PPQTNSINNNNNNNNNIKTNRPPLIYGEDKDK.

This is an uncharacterized protein from Dictyostelium discoideum (Social amoeba).